We begin with the raw amino-acid sequence, 174 residues long: 3-hydroxydecanoyl-[acyl-carrier-protein] dehydratase (174 aa).

Histidine 71 is an active-site residue.

It belongs to the thioester dehydratase family. FabA subfamily. In terms of assembly, homodimer.

It localises to the cytoplasm. The enzyme catalyses a (3R)-hydroxyacyl-[ACP] = a (2E)-enoyl-[ACP] + H2O. It catalyses the reaction (3R)-hydroxydecanoyl-[ACP] = (2E)-decenoyl-[ACP] + H2O. It carries out the reaction (2E)-decenoyl-[ACP] = (3Z)-decenoyl-[ACP]. Its pathway is lipid metabolism; fatty acid biosynthesis. Its function is as follows. Necessary for the introduction of cis unsaturation into fatty acids. Catalyzes the dehydration of (3R)-3-hydroxydecanoyl-ACP to E-(2)-decenoyl-ACP and then its isomerization to Z-(3)-decenoyl-ACP. Can catalyze the dehydratase reaction for beta-hydroxyacyl-ACPs with saturated chain lengths up to 16:0, being most active on intermediate chain length. In Nitrobacter winogradskyi (strain ATCC 25391 / DSM 10237 / CIP 104748 / NCIMB 11846 / Nb-255), this protein is 3-hydroxydecanoyl-[acyl-carrier-protein] dehydratase.